The following is a 227-amino-acid chain: Protein rapunzel (227 aa).

Residues 179–196 (LAYLFCIGFIALMGYYGI) traverse the membrane as a helical segment.

The protein localises to the membrane. This is Protein rapunzel from Danio rerio (Zebrafish).